A 461-amino-acid polypeptide reads, in one-letter code: PE-PGRS family protein PE_PGRS45 (461 aa).

Positions 4 to 92 constitute a PE domain; the sequence is VNVAPQLVST…GSTYAVAEAA (89 aa). Disordered stretches follow at residues 232 to 251 and 426 to 461; these read GGAG…GGNG and AGSL…GADG. Positions 434–446 are enriched in gly residues; that stretch reads PGFGGPGGSGGAS.

This sequence belongs to the mycobacterial PE family. PGRS subfamily. In terms of assembly, interacts with human TIMM23, which is part of a complex that mediates the translocation of transit peptide-containing proteins across the mitochondrial inner membrane.

The protein resides in the cell membrane. It localises to the secreted. It is found in the cell wall. The protein localises to the host mitochondrion. The catalysed reaction is hexadecanal + NADP(+) + CoA = hexadecanoyl-CoA + NADPH + H(+). Its activity is regulated as follows. Oxidoreductase activity is inhibited by the first line anti-tubercular drug isoniazid (INH). May be an effector protein that contributes to pathogenesis by targeting host mitochondria, where it modulates host cellular processes. In THP1 macrophages, increases the ADP-to-ATP ratio and increases the cellular ROS levels. Also induces mitochondrial perturbations through membrane depolarization, release of mitochondrial superoxide, up-regulation of expression of host proapoptotic proteins (BAX and BIM) and release of cytochrome C into the cytosol. May bind calcium to increase intracellular calcium influx, which may further lead to mitochondrial perturbations. Mitochondrial perturbations and alteration of Ca(2+) influx are independent but simultaneous events. Functionally, in vitro, shows NADPH-dependent fatty acyl coenzyme A oxidoreductase activity. Can oxidize palmitoyl-CoA, but not glutathione and thiourea. The polypeptide is PE-PGRS family protein PE_PGRS45 (Mycobacterium tuberculosis (strain ATCC 25618 / H37Rv)).